A 153-amino-acid chain; its full sequence is Satratoxin biosynthesis SC2 cluster transcription factor SAT15 (153 aa).

Its subcellular location is the nucleus. Functionally, transcriptional regulator that may regulate the expression of the satratoxin biosynthesis SC2 cluster, one of the 3 clusters involved in the biosynthesis of satratoxins, trichothecene mycotoxins that are associated with human food poisonings. This Stachybotrys chartarum (strain CBS 109288 / IBT 7711) (Toxic black mold) protein is Satratoxin biosynthesis SC2 cluster transcription factor SAT15.